Reading from the N-terminus, the 284-residue chain is uncharacterized protein (284 aa).

A helical membrane pass occupies residues 12-32 (ILFILFVVAFCVYLVPRVAIN).

It belongs to the serine esterase family.

It localises to the membrane. This is an uncharacterized protein from Escherichia coli (strain K12).